The primary structure comprises 321 residues: Lipoyl synthase (321 aa).

[4Fe-4S] cluster contacts are provided by cysteine 68, cysteine 73, cysteine 79, cysteine 94, cysteine 98, cysteine 101, and serine 308. One can recognise a Radical SAM core domain in the interval phenylalanine 80 to threonine 297.

This sequence belongs to the radical SAM superfamily. Lipoyl synthase family. The cofactor is [4Fe-4S] cluster.

The protein localises to the cytoplasm. The catalysed reaction is [[Fe-S] cluster scaffold protein carrying a second [4Fe-4S](2+) cluster] + N(6)-octanoyl-L-lysyl-[protein] + 2 oxidized [2Fe-2S]-[ferredoxin] + 2 S-adenosyl-L-methionine + 4 H(+) = [[Fe-S] cluster scaffold protein] + N(6)-[(R)-dihydrolipoyl]-L-lysyl-[protein] + 4 Fe(3+) + 2 hydrogen sulfide + 2 5'-deoxyadenosine + 2 L-methionine + 2 reduced [2Fe-2S]-[ferredoxin]. The protein operates within protein modification; protein lipoylation via endogenous pathway; protein N(6)-(lipoyl)lysine from octanoyl-[acyl-carrier-protein]: step 2/2. Its function is as follows. Catalyzes the radical-mediated insertion of two sulfur atoms into the C-6 and C-8 positions of the octanoyl moiety bound to the lipoyl domains of lipoate-dependent enzymes, thereby converting the octanoylated domains into lipoylated derivatives. The protein is Lipoyl synthase of Shewanella baltica (strain OS223).